A 352-amino-acid chain; its full sequence is Protein RecA (352 aa).

Position 67-74 (67-74 (GPESSGKT)) interacts with ATP.

The protein belongs to the RecA family.

Its subcellular location is the cytoplasm. Its function is as follows. Can catalyze the hydrolysis of ATP in the presence of single-stranded DNA, the ATP-dependent uptake of single-stranded DNA by duplex DNA, and the ATP-dependent hybridization of homologous single-stranded DNAs. It interacts with LexA causing its activation and leading to its autocatalytic cleavage. The protein is Protein RecA of Chlamydia trachomatis serovar L2 (strain ATCC VR-902B / DSM 19102 / 434/Bu).